The following is a 305-amino-acid chain: uncharacterized protein (305 aa).

This is an uncharacterized protein from Methanocaldococcus jannaschii (strain ATCC 43067 / DSM 2661 / JAL-1 / JCM 10045 / NBRC 100440) (Methanococcus jannaschii).